The primary structure comprises 326 residues: Trans-L-3-hydroxyproline dehydratase (326 aa).

The active-site Proton acceptor is the cysteine 80. Substrate-binding positions include 81-82, aspartate 241, and 246-247; these read GH and GS.

This sequence belongs to the proline racemase family. In terms of assembly, homodimer.

It catalyses the reaction trans-3-hydroxy-L-proline = 1-pyrroline-2-carboxylate + H2O. Its function is as follows. Catalyzes the dehydration of trans-3-hydroxy-L-proline to delta-1-pyrroline-2-carboxylate (Pyr2C). This is Trans-L-3-hydroxyproline dehydratase (l3hypdh) from Saccoglossus kowalevskii (Acorn worm).